The sequence spans 635 residues: DNA mismatch repair protein MutL (635 aa).

The tract at residues 352–380 (KAALQRGWVPPGAGRPGEGGGRAAPPPWR) is disordered.

The protein belongs to the DNA mismatch repair MutL/HexB family.

Its function is as follows. This protein is involved in the repair of mismatches in DNA. It is required for dam-dependent methyl-directed DNA mismatch repair. May act as a 'molecular matchmaker', a protein that promotes the formation of a stable complex between two or more DNA-binding proteins in an ATP-dependent manner without itself being part of a final effector complex. The protein is DNA mismatch repair protein MutL of Symbiobacterium thermophilum (strain DSM 24528 / JCM 14929 / IAM 14863 / T).